The chain runs to 923 residues: Cell cycle and apoptosis regulator protein 2 (923 aa).

The segment at 1-35 (MSQFKRQRINPLPGGRNFSGTASTSLLGPPPGLLT) is disordered. The residue at position 35 (T35) is a Phosphothreonine. At K112 the chain carries N6-acetyllysine; by KAT8. K123 is subject to N6-methyllysine. S124 bears the Phosphoserine mark. 3 disordered regions span residues 178 to 218 (LNRF…KKPR), 446 to 510 (KAAE…PAVI), and 568 to 643 (VSPP…SEDL). Residue R180 is modified to Omega-N-methylarginine. The segment covering 188-200 (GRLDQGRSDDYDS) has biased composition (basic and acidic residues). At K215 the chain carries N6-acetyllysine; by KAT8. A compositionally biased stretch (low complexity) spans 446 to 458 (KAAEAAPPTQEAQ). T454 carries the post-translational modification Phosphothreonine; by ATM, ATR and CK2. Phosphothreonine is present on T484. S569 bears the Phosphoserine mark. Residues 572–602 (EPEKEEAAKEEATKEEEAIKEEVVKEPKDEA) show a composition bias toward basic and acidic residues. K591 is covalently cross-linked (Glycyl lysine isopeptide (Lys-Gly) (interchain with G-Cter in SUMO2 and SUMO3); alternate). Residue K591 forms a Glycyl lysine isopeptide (Lys-Gly) (interchain with G-Cter in SUMO2); alternate linkage. An interaction with MCC region spans residues 610–670 (ESEAPLKEDG…EEFAGAKLED (61 aa)). 6 positions are modified to phosphoserine: S627, S675, S678, S681, S687, and S808. An interaction with NR1D1 region spans residues 704–923 (DCLLAFVFFD…VEKEEPAPSN (220 aa)). The stretch at 829-909 (LENKIHTLEL…QLEIQRVVEK (81 aa)) forms a coiled coil. Phosphothreonine is present on T897.

Component of the DBIRD complex. Interacts with ZNF326/ZIRD; the interaction is direct. Interacts (via N-terminus) with SIRT1, which inhibits the deacetylation of substrates. Interacts (via N-terminus) with SUV39H1; this interaction abolishes the interaction with SIRT1. Component of a nuclear receptor-mediated transcription complex composed of at least ZNF335, CCAR2 and EMSY; the complex stimulates the transcription of nuclear receptor target genes such as SOX9 and HOXA1. Within the complex interacts with EMSY and interacts with ZNF335 (via C-terminus). Components of this complex may associate with components of a histone methylation complex to form a complex at least composed of ZNF335, HCFC1, CCAR2, EMSY, MKI67, RBBP5, ASH2L and WDR5. Within this complex, interacts with ASH2L. Interacts with NR1D1. Interacts (via N-terminus) with ESR1 and ESR2. Interacts (via N-terminus) with HDAC3 (via C-terminus). Interacts with HDAC1 and MED2F. Interacts with MCC. Interacts (via N-terminus) with NR1H2 and NR1H3 in a ligand-independent manner. Interacts with CSNK2A1. Interacts (via N-terminus) with p53/TP53. Interacts (via N-terminus) with BRCA1 (via the BRCT domains). Interacts (via N-terminus) with CHEK2 (via protein kinase domain). Interacts with PSEM3. Interacts (via N-terminus) with PSIA3 and SENP1. The sumoylated form shows a preferential interaction with SIRT1 as compared to its unmodified form. Interacts with CECR2; may form part of the CERF-1 and/or CEF-5 ISWI chromatin remodeling complexes in embryonic stem cells. Post-translationally, ATM/ATR-mediated phosphorylation at Thr-454 upon DNA damage promotes binding to SIRT1. Phosphorylation at Thr-454 promotes its sumoylation by switching the binding partner of CCAR2 from SENP1 to PIAS3. In terms of processing, acetylation at Lys-112 and Lys-215 by KAT8 prevents inhibitory binding to SIRT1 and increases its deacetylase activity. Genotoxic stress induces its sumoylation and sumoylation promotes the SIRT1-CCAR2 interaction which in turn inhibits SIRT1-mediated deacetylation of p53/TP53. Sumoylation leads to transcriptional activation of p53/TP53 by sequestering SIRT1 from p53/TP53. Desumoylated by SENP1. As to expression, expressed in gastric carcinoma tissue and the expression gradually increases with the progression of the carcinoma (at protein level). Expressed ubiquitously in normal tissues. Expressed in 84 to 100% of neoplastic breast, lung, and colon tissues.

The protein localises to the nucleus. The protein resides in the cytoplasm. It localises to the cytoskeleton. It is found in the spindle. In terms of biological role, core component of the DBIRD complex, a multiprotein complex that acts at the interface between core mRNP particles and RNA polymerase II (RNAPII) and integrates transcript elongation with the regulation of alternative splicing: the DBIRD complex affects local transcript elongation rates and alternative splicing of a large set of exons embedded in (A + T)-rich DNA regions. Inhibits SIRT1 deacetylase activity leading to increasing levels of p53/TP53 acetylation and p53-mediated apoptosis. Inhibits SUV39H1 methyltransferase activity. Mediates ligand-dependent transcriptional activation by nuclear hormone receptors. Plays a critical role in maintaining genomic stability and cellular integrity following UV-induced genotoxic stress. Regulates the circadian expression of the core clock components NR1D1 and BMAL1. Enhances the transcriptional repressor activity of NR1D1 through stabilization of NR1D1 protein levels by preventing its ubiquitination and subsequent degradation. Represses the ligand-dependent transcriptional activation function of ESR2. Acts as a regulator of PCK1 expression and gluconeogenesis by a mechanism that involves, at least in part, both NR1D1 and SIRT1. Negatively regulates the deacetylase activity of HDAC3 and can alter its subcellular localization. Positively regulates the beta-catenin pathway (canonical Wnt signaling pathway) and is required for MCC-mediated repression of the beta-catenin pathway. Represses ligand-dependent transcriptional activation function of NR1H2 and NR1H3 and inhibits the interaction of SIRT1 with NR1H3. Plays an important role in tumor suppression through p53/TP53 regulation; stabilizes p53/TP53 by affecting its interaction with ubiquitin ligase MDM2. Represses the transcriptional activator activity of BRCA1. Inhibits SIRT1 in a CHEK2 and PSEM3-dependent manner and inhibits the activity of CHEK2 in vitro. This chain is Cell cycle and apoptosis regulator protein 2 (CCAR2), found in Homo sapiens (Human).